Reading from the N-terminus, the 760-residue chain is DNA replication licensing factor mcm7 (760 aa).

In terms of domain architecture, MCM spans 353-559 (VYEKLAKSIA…ETDEHLAQHV (207 aa)). Positions 366, 406, 408, 409, 410, 511, 536, and 630 each coordinate ATP. Positions 535–538 (SRFD) match the Arginine finger motif.

This sequence belongs to the MCM family. Component of the mcm2-7 complex. The complex forms a toroidal hexameric ring with the proposed subunit order mcm2-mcm6-mcm4-mcm7-mcm3-mcm5. The heterodimers of mcm4/mcm6 and mcm3/mcm5 interact with mcm2 and mcm7. Interacts with sld3 and mcm10.

The protein resides in the nucleus. It carries out the reaction ATP + H2O = ADP + phosphate + H(+). Its function is as follows. Acts as a component of the MCM2-7 complex (MCM complex) which is the replicative helicase essential for 'once per cell cycle' DNA replication initiation and elongation in eukaryotic cells. Core component of CDC45-MCM-GINS (CMG) helicase, the molecular machine that unwinds template DNA during replication, and around which the replisome is built. The active ATPase sites in the MCM2-7 ring are formed through the interaction surfaces of two neighboring subunits such that a critical structure of a conserved arginine finger motif is provided in trans relative to the ATP-binding site of the Walker A box of the adjacent subunit. The six ATPase active sites, however, are likely to contribute differentially to the complex helicase activity. Required for the progression of S phase. The sequence is that of DNA replication licensing factor mcm7 (mcm7) from Schizosaccharomyces pombe (strain 972 / ATCC 24843) (Fission yeast).